A 459-amino-acid chain; its full sequence is tRNA uridine(34) acetyltransferase (459 aa).

The tract at residues 1–278 is radical S-adenosyl-L-methionine (rSAM); the sequence is MKKLSRTISG…VPPYVRISRV (278 aa). The Radical SAM core domain maps to 6–271; sequence RTISGVTPVA…IADIKALVPP (266 aa). Residues Cys23, Cys27, and Cys30 each contribute to the [4Fe-4S] cluster site. Lys77 serves as a coordination point for acetyl-CoA. The tract at residues 308–459 is N-acetyltransferase; that stretch reads QKCRCIRCRE…VAGYMCKHLD (152 aa). 3 residues coordinate Zn(2+): Cys310, Cys312, and Cys315. Residues 386 to 389, 409 to 411, and Tyr442 contribute to the acetyl-CoA site; these read ELHV and LGR.

This sequence belongs to the ELP3 family. In terms of assembly, homodimer. Requires [4Fe-4S] cluster as cofactor.

The catalysed reaction is uridine(34) in tRNA + acetyl-CoA + S-adenosyl-L-methionine + H2O = 5-(carboxymethyl)uridine(34) in tRNA + 5'-deoxyadenosine + L-methionine + CoA + 2 H(+). It functions in the pathway tRNA modification. TRNA uridine(34) acetyltransferase, which mediates formation of carboxymethyluridine in the wobble base at position 34 in tRNAs. The proposed mechanism is the following: (i) recruits S-adenosyl-L-methionine and cleaves it to generate a 5'-deoxyadenosine radical (5'-dA) in the radical S-adenosyl-L-methionine (rSAM) region, (ii) hydrolyzes acetyl-CoA in the N-acetyltransferase domain and (iii) an acetyl radical is formed by the products of the two domains and (iv) is transferred onto the C5 position of uridine(34) in the bound tRNA molecule. Does not show protein lysine acetyltransferase activity. The protein is tRNA uridine(34) acetyltransferase of Dehalococcoides mccartyi (strain CBDB1).